Reading from the N-terminus, the 241-residue chain is Enterotoxin type H (241 aa).

A signal peptide spans 1–24; the sequence is MINKIKILFSFLALLLSFTSYAKA. The cysteines at positions 106 and 116 are disulfide-linked. Zn(2+) is bound by residues D191, H230, and D232.

Belongs to the staphylococcal/streptococcal toxin family. Interacts with host MHC class II molecules composed of alpha/HLA-DRA and beta/HLA-DRB1 chains. Interacts with host TCR alpha-chain TRAV27. Requires Zn(2+) as cofactor.

It is found in the secreted. Staphylococcal enterotoxin that activates the host immune system by binding as unprocessed molecules to major histocompatibility (MHC) complex class II and T-cell receptor (TCR) molecules via their alpha domain, in particular TRAV27. In turn, this ternary complex activates a large number of T-lymphocytes initiating a systemic release of pro-inflammatory cytokines. Also causes the intoxication staphylococcal food poisoning syndrome. The illness characterized by high fever, hypotension, diarrhea, shock, and in some cases death. In Staphylococcus aureus, this protein is Enterotoxin type H (entH).